Reading from the N-terminus, the 1037-residue chain is Signal-induced proliferation-associated protein 1 (1037 aa).

A disordered region spans residues 1–85 (MWAGGVGSPR…ASRPAATPTR (85 aa)). Thr-62 is modified (phosphothreonine). 4 positions are modified to phosphoserine: Ser-65, Ser-178, Ser-299, and Ser-309. Positions 316–534 (LLTLDEQVLS…RTRQQYLQDL (219 aa)) constitute a Rap-GAP domain. A PDZ domain is found at 682-758 (ELALPRDGQG…VCVTVLPPDE (77 aa)). Residues Ser-812 and Ser-834 each carry the phosphoserine modification. Disordered regions lie at residues 830 to 849 (HNSL…LPNT) and 855 to 898 (LVTT…ASIL). Residues 871-881 (PPSQDQSGSPS) are compositionally biased toward low complexity. The residue at position 907 (Ser-907) is a Phosphoserine. The segment at 943-969 (REGQPISESGDPKEALKCDSEPEPGSL) is disordered. Residues 952-962 (GDPKEALKCDS) are compositionally biased toward basic and acidic residues. Positions 968–1025 (SLSEKVSHLESMLWKLQEDLQREKADRAALEEEVRSLRHNNQRLLAESESAATRLLLA) form a coiled coil.

In terms of assembly, interacts with RRP1B; the interaction leads to inhibition of SIPA1 GTPase activity. As to expression, preferentially expressed in both fetal and adult lymphohematopoietic tissues.

It is found in the nucleus. It localises to the cytoplasm. Its subcellular location is the perinuclear region. The protein resides in the endomembrane system. GTPase activator for the nuclear Ras-related regulatory proteins Rap1, Rsr1 and Ran in vitro, converting them to the putatively inactive GDP-bound state. Affects cell cycle progression. The sequence is that of Signal-induced proliferation-associated protein 1 (Sipa1) from Mus musculus (Mouse).